Consider the following 172-residue polypeptide: Stellate protein CG33238 (172 aa).

This sequence belongs to the casein kinase 2 subunit beta family. Interacts in vitro with the casein kinase 2 alpha subunit (CkII-alpha). The relevance of such interaction is however unclear in vivo. Probably not expressed in wild-type flies. In males lacking the Y chromosome, it is testis-specific and constitutes the main component of star-shaped crystals.

In terms of biological role, unknown. In males lacking the Y chromosome, its strong overexpression leads to the appearance of proteinaceous star-shaped crystals in the primary spermatocytes causing meiotic drive, possibly by interfering with normal casein kinase 2 activity. This Drosophila melanogaster (Fruit fly) protein is Stellate protein CG33238 (Ste:CG33238).